Consider the following 424-residue polypeptide: UDP-sugar transporter protein SLC35A5 (424 aa).

Residues 1-8 (MEKQCCSH) are Cytoplasmic-facing. A helical membrane pass occupies residues 9–29 (PVICSLSTMYTFLLGAIFIAL). At 30–53 (SSSRILLVKYSANEENKYDYLPTT) the chain is on the lumenal side. The chain crosses the membrane as a helical span at residues 54-74 (ANVCSELVKLVFCVLVSFCVI). Topologically, residues 75–93 (KKDHQSRNLKYASWKEFSN) are cytoplasmic. A helical transmembrane segment spans residues 94 to 116 (FMKWSIPAFLYFLDNLIVFYVLS). Residues 117–119 (YLQ) are Lumenal-facing. A helical transmembrane segment spans residues 120-142 (PAMAVIFSNFSIITTALLFRIVL). Residues 143–147 (KRRLN) lie on the Cytoplasmic side of the membrane. A helical membrane pass occupies residues 148–168 (WIQWASLLILFLSIVALTAGT). Topologically, residues 169 to 228 (KTLQHNLAGHGFHHDAFFSPSNSCLLFRSECPRKDNCTAKEWTFPEAKWNTTARVFSHIR) are lumenal. Residue asparagine 204 is glycosylated (N-linked (GlcNAc...) asparagine). The helical transmembrane segment at 229–249 (LGMGHVLIIVQCFISSMANIY) threads the bilayer. The Cytoplasmic portion of the chain corresponds to 250–263 (NEKILKEGNQLAES). A helical transmembrane segment spans residues 264-284 (IFIQNSKLYFFGILFNGLTLG). The Lumenal portion of the chain corresponds to 285-303 (LQRSNRDQIKNCGFFYGHN). Residues 304 to 324 (AFSVALIFVTAFQGLSVAFIL) traverse the membrane as a helical segment. Residues 325 to 330 (KFLDNM) are Cytoplasmic-facing. Residues 331–351 (FHVLMAQVTTVIITTVSVLVF) traverse the membrane as a helical segment. At 352–354 (DFR) the chain is on the lumenal side. The chain crosses the membrane as a helical span at residues 355-375 (PSLEFFLEAPSVLLSIFIYNA). At 376–424 (SKPQGPEYAPRQERIRDLSGNLWERSSGDGEELERLTKPKSDESDEDTF) the chain is on the cytoplasmic side. Phosphoserine is present on residues serine 394, serine 416, and serine 419. Positions 395-424 (GNLWERSSGDGEELERLTKPKSDESDEDTF) are disordered. Positions 408 to 417 (LERLTKPKSD) are enriched in basic and acidic residues.

Belongs to the nucleotide-sugar transporter family. SLC35A subfamily. In terms of assembly, probably forms homooligomers and heterooligomers with SLC35A1, SLC35A2, SLC35A3 and SLC35A4.

The protein resides in the golgi apparatus membrane. The enzyme catalyses UMP(out) + UDP-alpha-D-glucuronate(in) = UMP(in) + UDP-alpha-D-glucuronate(out). It catalyses the reaction UMP(out) + UDP-N-acetyl-alpha-D-glucosamine(in) = UMP(in) + UDP-N-acetyl-alpha-D-glucosamine(out). The catalysed reaction is UDP-N-acetyl-alpha-D-galactosamine(in) + UMP(out) = UDP-N-acetyl-alpha-D-galactosamine(out) + UMP(in). Probable UDP-sugar:UMP transmembrane antiporter involved in UDP-alpha-D-glucuronate/UDP-GlcA, UDP-GlcNAc/UDP-N-acetyl-alpha-D-glucosamine and UDP-N-acetyl-alpha-D-galactosamine/UDP-GalNAc transport from the cytosol to the lumen of the Golgi. This chain is UDP-sugar transporter protein SLC35A5, found in Pongo abelii (Sumatran orangutan).